Consider the following 288-residue polypeptide: Diaminopimelate epimerase (288 aa).

2 residues coordinate substrate: Asn-14 and Asn-67. The active-site Proton donor is the Cys-76. Residues Gly-77 to Asn-78, Asn-166, Asn-199, and Glu-217 to Arg-218 contribute to the substrate site. Cys-226 functions as the Proton acceptor in the catalytic mechanism. Position 227 to 228 (Gly-227 to Thr-228) interacts with substrate.

This sequence belongs to the diaminopimelate epimerase family. In terms of assembly, homodimer.

The protein localises to the cytoplasm. The catalysed reaction is (2S,6S)-2,6-diaminopimelate = meso-2,6-diaminopimelate. It participates in amino-acid biosynthesis; L-lysine biosynthesis via DAP pathway; DL-2,6-diaminopimelate from LL-2,6-diaminopimelate: step 1/1. Catalyzes the stereoinversion of LL-2,6-diaminopimelate (L,L-DAP) to meso-diaminopimelate (meso-DAP), a precursor of L-lysine and an essential component of the bacterial peptidoglycan. This Bacillus cereus (strain B4264) protein is Diaminopimelate epimerase.